A 512-amino-acid chain; its full sequence is Phospho-2-dehydro-3-deoxyheptonate aldolase 2, chloroplastic (512 aa).

The transit peptide at methionine 1–proline 57 directs the protein to the chloroplast. Residues phenylalanine 37–proline 57 form a disordered region. Cysteine 126 is a binding site for Mn(2+). Substrate-binding positions include arginine 165, glutamate 324 to arginine 325, lysine 347, and arginine 378. Residues histidine 410, glutamate 452, and aspartate 482 each contribute to the Mn(2+) site.

The protein belongs to the class-II DAHP synthase family. In terms of assembly, homodimer. Requires Mn(2+) as cofactor. In terms of tissue distribution, mostly expressed in leaves and stems, and, to a lower extent, in roots, stigmas, anthers, petal tubes, petal limbs and sepals.

It is found in the plastid. The protein resides in the chloroplast. It catalyses the reaction D-erythrose 4-phosphate + phosphoenolpyruvate + H2O = 7-phospho-2-dehydro-3-deoxy-D-arabino-heptonate + phosphate. Its pathway is metabolic intermediate biosynthesis; chorismate biosynthesis; chorismate from D-erythrose 4-phosphate and phosphoenolpyruvate: step 1/7. Involved in the production of volatile organic compounds (VOCs). Catalyzes an aldol-like condensation reaction between phosphoenolpyruvate (PEP) and D-erythrose 4-phosphate (E4P) to generate 3-deoxy-D-arabino-heptulosonate 7-phosphate (DAH7P) and inorganic phosphate. The sequence is that of Phospho-2-dehydro-3-deoxyheptonate aldolase 2, chloroplastic from Petunia hybrida (Petunia).